A 751-amino-acid polypeptide reads, in one-letter code: Cytosolic neutral trehalase (751 aa).

The span at 1-10 (MSQVNTSQGP) shows a compositional bias: polar residues. A disordered region spans residues 1-59 (MSQVNTSQGPVAQGRQRRLSSLSEFNDPFSNAEVYYGPPTDPRKQKQAKPAKINRTRTM). Position 2 is an N-acetylserine (serine 2). Serine 20 and serine 21 each carry phosphoserine; by PKA. At serine 23 the chain carries Phosphoserine. Basic residues predominate over residues 45–55 (QKQAKPAKINR). Threonine 58 carries the phosphothreonine modification. Serine 60 bears the Phosphoserine; by PKA mark. The residue at position 66 (serine 66) is a Phosphoserine. Residues 73–92 (FGKLQQTRRGSEDDTYSSSQ) are disordered. Residue serine 83 is modified to Phosphoserine; by PKA. Residues aspartate 114, aspartate 116, asparagine 118, glutamine 120, and aspartate 125 each coordinate Ca(2+). Substrate-binding positions include arginine 302, 309-310 (WD), asparagine 346, 355-357 (RSQ), glutamate 424, arginine 473, and glycine 476. Active-site proton donor/acceptor residues include aspartate 478 and glutamate 674.

It belongs to the glycosyl hydrolase 37 family. Monomer. Interacts with BMH1 dimers; the interaction is direct and activates NTH1. Interacts with BMH2. The cofactor is Ca(2+). In terms of processing, phosphorylated by protein kinase A (PKA); phosphorylation at Ser-60 and Ser-83 is required for activation by the 14-3-3 proteins BMH1 and BMH2.

The protein localises to the cytoplasm. It catalyses the reaction alpha,alpha-trehalose + H2O = alpha-D-glucose + beta-D-glucose. Its pathway is carbohydrate degradation. With respect to regulation, activated by calcium. Activated by protein kinase A (PKA)-mediated phosphorylation. Functionally, hydrolyzes intracellular trehalose to glucose. The disaccharide trehalose serves as a storage carbohydrate that is mobilized during nutrient stress. Regulates the level of trehalose as a protectant for cell integrity during heat stress. The protein is Cytosolic neutral trehalase of Saccharomyces cerevisiae (strain ATCC 204508 / S288c) (Baker's yeast).